Here is a 165-residue protein sequence, read N- to C-terminus: Disulfide bond formation protein B (165 aa).

At 1 to 11 the chain is on the cytoplasmic side; it reads MICSKVPVRAW. A helical membrane pass occupies residues 12 to 28; the sequence is FATLGLGCLGLVAVGMA. Residues 29–46 are Periplasmic-facing; it reads LQTLLHLAPCPLCIFQRL. The cysteines at positions 38 and 41 are disulfide-linked. A helical membrane pass occupies residues 47 to 61; the sequence is LYIMIGFVGLLGFVL. Over 62-66 the chain is Cytoplasmic; sequence PAGRL. Residues 67–84 traverse the membrane as a helical segment; the sequence is LWSTLAAGLGVLGFGVAA. Residues 85–142 are Periplasmic-facing; that stretch reads YQTWMQAFPDLAPECGFTDPNAIERLVDWLGMEWPSMFLATGFCTSRDWELLGLSMAN. A disulfide bridge links Cys99 with Cys128. Residues 143 to 161 form a helical membrane-spanning segment; sequence WSVLIFAGIVAYAVLLFVR. Residues 162–165 lie on the Cytoplasmic side of the membrane; that stretch reads KDRA.

The protein belongs to the DsbB family.

Its subcellular location is the cell inner membrane. Required for disulfide bond formation in some periplasmic proteins. Acts by oxidizing the DsbA protein. This chain is Disulfide bond formation protein B, found in Dechloromonas aromatica (strain RCB).